A 184-amino-acid polypeptide reads, in one-letter code: Chromophore lyase CpcS/CpeS 1 (184 aa).

It belongs to the CpcS/CpeS biliprotein lyase family.

Functionally, covalently attaches a chromophore to Cys residue(s) of phycobiliproteins. This Synechococcus sp. (strain JA-3-3Ab) (Cyanobacteria bacterium Yellowstone A-Prime) protein is Chromophore lyase CpcS/CpeS 1.